The primary structure comprises 395 residues: RNA polymerase II elongation factor ELL3 (395 aa).

2 disordered regions span residues L129–M177 and P189–E281. S242 is modified (phosphoserine). Residues Q243–G260 show a composition bias toward acidic residues. Over residues S269–P279 the composition is skewed to low complexity. One can recognise an OCEL domain in the interval P283–R393.

Belongs to the ELL/occludin family. Component of the little elongation complex (LEC), at least composed of ELL (ELL, ELL2 or ELL3), ZC3H8, ICE1 and ICE2. Component of the super elongation complex (SEC), at least composed of EAF1, EAF2, CDK9, MLLT3/AF9, AFF (AFF1 or AFF4), the P-TEFb complex and ELL (ELL, ELL2 or ELL3). Interacts with AFF4. Actively expressed in embryonic stem cells (ES cells), while it is weakly expressed in differentiated cells.

It is found in the nucleus. Its function is as follows. Enhancer-binding elongation factor that specifically binds enhancers in embryonic stem cells (ES cells), marks them, and is required for their future activation during stem cell specification. Elongation factor component of the super elongation complex (SEC), a complex required to increase the catalytic rate of RNA polymerase II transcription by suppressing transient pausing by the polymerase at multiple sites along the DNA. Component of the little elongation complex (LEC), a complex required to regulate small nuclear RNA (snRNA) gene transcription by RNA polymerase II and III. Does not only bind to enhancer regions of active genes, but also marks the enhancers that are in a poised or inactive state in ES cells and is required for establishing proper RNA polymerase II occupancy at developmentally regulated genes in a cohesin-dependent manner. Probably required for priming developmentally regulated genes for later recruitment of the super elongation complex (SEC), for transcriptional activation during differentiation. Required for recruitment of P-TEFb within SEC during differentiation. Probably preloaded on germ cell chromatin, suggesting that it may prime gene activation by marking enhancers as early as in the germ cells. Promoting epithelial-mesenchymal transition (EMT). The protein is RNA polymerase II elongation factor ELL3 (Ell3) of Mus musculus (Mouse).